Here is a 133-residue protein sequence, read N- to C-terminus: Ribosome-binding factor A (133 aa).

It belongs to the RbfA family. As to quaternary structure, monomer. Binds 30S ribosomal subunits, but not 50S ribosomal subunits or 70S ribosomes.

It localises to the cytoplasm. Functionally, one of several proteins that assist in the late maturation steps of the functional core of the 30S ribosomal subunit. Associates with free 30S ribosomal subunits (but not with 30S subunits that are part of 70S ribosomes or polysomes). Required for efficient processing of 16S rRNA. May interact with the 5'-terminal helix region of 16S rRNA. This is Ribosome-binding factor A from Shigella boydii serotype 18 (strain CDC 3083-94 / BS512).